The following is a 713-amino-acid chain: Bifunctional protein gal10 (713 aa).

The segment at 1–350 is galactowaldenase; sequence MAVQDEYILV…TIENPFGFQI (350 aa). Position 7-38 (7-38) interacts with NAD(+); the sequence is YILVTGGAGYIGSHTVIELINHGYKVIIVDNL. The tract at residues 351–713 is mutarotase; it reads DNYKWKLFNT…SASYNSGEYY (363 aa). His-532 acts as the For mutarotase activity in catalysis.

It in the N-terminal section; belongs to the NAD(P)-dependent epimerase/dehydratase family. The protein in the C-terminal section; belongs to the aldose epimerase family. NAD(+) is required as a cofactor.

It catalyses the reaction UDP-alpha-D-glucose = UDP-alpha-D-galactose. The catalysed reaction is alpha-D-glucose = beta-D-glucose. The protein operates within carbohydrate metabolism; galactose metabolism. It functions in the pathway carbohydrate metabolism; hexose metabolism. Mutarotase converts alpha-aldose to the beta-anomer. It is active on D-glucose, L-arabinose, D-xylose, D-galactose, maltose and lactose. In Schizosaccharomyces pombe (strain 972 / ATCC 24843) (Fission yeast), this protein is Bifunctional protein gal10 (gal10).